Here is a 500-residue protein sequence, read N- to C-terminus: Serine/threonine-protein phosphatase 2A 56 kDa regulatory subunit beta isoform (500 aa).

Residues 1-19 (METKLPPASTPTSPSSPGL) are compositionally biased toward low complexity. Disordered regions lie at residues 1–55 (METK…YQSN) and 474–500 (GTQG…GGQS). A phosphoserine; by CLK2 mark is found at serine 32, serine 35, serine 44, serine 46, serine 47, and serine 48. The span at 34–45 (RSLRRARPRRSH) shows a compositional bias: basic residues.

This sequence belongs to the phosphatase 2A regulatory subunit B56 family. As to quaternary structure, component of the serine/threonine-protein phosphatase 2A complex (PP2A). This complex consists of a common heterodimeric core enzyme, composed of a 36 kDa catalytic subunit (subunit C) and a 65 kDa constant scaffold subunit (PR65 or subunit A), that associates with a variety of regulatory subunits. Proteins that associate with the core dimer include three families of regulatory subunits B (the R2/B/PR55/B55, R3/B''/PR72/PR130/PR59 and R5/B'/B56 families), the 48 kDa variable regulatory subunit, viral proteins, and cell signaling molecules. Interacts with SGO1. Interacts with AKT1. As to expression, highly expressed in brain.

The protein localises to the nucleus. In terms of biological role, as the regulatory component of the serine/threonine-protein phosphatase 2A (PP2A) holoenzyme, modulates substrate specificity, subcellular localization, and responsiveness to phosphorylation. The phosphorylated form mediates the interaction between PP2A and AKT1, leading to AKT1 dephosphorylation. This chain is Serine/threonine-protein phosphatase 2A 56 kDa regulatory subunit beta isoform (PPP2R5B), found in Oryctolagus cuniculus (Rabbit).